We begin with the raw amino-acid sequence, 361 residues long: Mitogen-activated protein kinase 14 (361 aa).

Residues 25-309 (YQNLTPVGSG…AAEALAHSYF (285 aa)) form the Protein kinase domain. ATP is bound by residues 31–39 (VGSGAYGSV) and K54. The Proton acceptor role is filled by D151. Position 181 is a phosphothreonine (T181). The TXY signature appears at 181 to 183 (TGY). Phosphotyrosine is present on Y183.

It belongs to the protein kinase superfamily. CMGC Ser/Thr protein kinase family. MAP kinase subfamily. Mg(2+) serves as cofactor. Post-translationally, dually phosphorylated on Thr-181 and Tyr-183, which activates the enzyme.

The catalysed reaction is L-seryl-[protein] + ATP = O-phospho-L-seryl-[protein] + ADP + H(+). It catalyses the reaction L-threonyl-[protein] + ATP = O-phospho-L-threonyl-[protein] + ADP + H(+). With respect to regulation, activated by tyrosine and threonine phosphorylation. Functionally, serine/threonine kinase which acts as an essential component of the MAP kinase signal transduction pathway. mapk14a is one of the four p38 MAPKs which play an important role in the cascades of cellular responses evoked by extracellular stimuli such as pro-inflammatory cytokines or physical stress leading to direct activation of transcription factors. Accordingly, p38 MAPKs phosphorylate a broad range of proteins and it has been estimated that they may have approximately 200 to 300 substrates each. Some of the targets are downstream kinases which are activated through phosphorylation and further phosphorylate additional targets. MPK2 is activated by upstream MAPKK/MAPKKK and stimulates MAPKAP kinase 2 to phosphorylate small heat shock proteins. Does not phosphorylate myelin basic protein or MAPKAP kinase 1. The chain is Mitogen-activated protein kinase 14 (mapk14) from Xenopus laevis (African clawed frog).